The primary structure comprises 279 residues: Large ribosomal subunit protein uL2 (279 aa).

Positions R218–R279 are disordered. Over residues K255–R279 the composition is skewed to basic residues.

The protein belongs to the universal ribosomal protein uL2 family. In terms of assembly, part of the 50S ribosomal subunit. Forms a bridge to the 30S subunit in the 70S ribosome.

One of the primary rRNA binding proteins. Required for association of the 30S and 50S subunits to form the 70S ribosome, for tRNA binding and peptide bond formation. It has been suggested to have peptidyltransferase activity; this is somewhat controversial. Makes several contacts with the 16S rRNA in the 70S ribosome. In Sulfurimonas denitrificans (strain ATCC 33889 / DSM 1251) (Thiomicrospira denitrificans (strain ATCC 33889 / DSM 1251)), this protein is Large ribosomal subunit protein uL2.